A 425-amino-acid polypeptide reads, in one-letter code: Kynurenine/alpha-aminoadipate aminotransferase, mitochondrial (425 aa).

Residues 1–29 (MNYARFITATSAARKPSTIRVMTEILSKA) constitute a mitochondrion transit peptide. Residue arginine 20 participates in substrate binding. Position 69 is an N6-acetyllysine (lysine 69). Substrate is bound by residues tyrosine 74 and tyrosine 142. Positions 178–208 (WKPEDSKNPKKNSPKFLYTVPNGNNPSGNSL) are disordered. Position 179 is an N6-acetyllysine (lysine 179). Residues 198–208 (PNGNNPSGNSL) are compositionally biased toward polar residues. Asparagine 202 contacts substrate. An N6-(pyridoxal phosphate)lysine; alternate modification is found at lysine 263. 2 positions are modified to N6-acetyllysine; alternate: lysine 263 and lysine 339. N6-succinyllysine; alternate occurs at positions 263 and 339. Arginine 399 serves as a coordination point for substrate. At lysine 422 the chain carries N6-acetyllysine.

It belongs to the class-I pyridoxal-phosphate-dependent aminotransferase family. As to quaternary structure, homodimer. Requires pyridoxal 5'-phosphate as cofactor.

It is found in the mitochondrion. The catalysed reaction is L-kynurenine + 2-oxoglutarate = kynurenate + L-glutamate + H2O. It carries out the reaction L-2-aminoadipate + 2-oxoglutarate = 2-oxoadipate + L-glutamate. It catalyses the reaction glycine + 2-oxoglutarate = glyoxylate + L-glutamate. The enzyme catalyses L-kynurenine + glyoxylate = kynurenate + glycine + H2O. The catalysed reaction is 3-hydroxy-L-kynurenine + glyoxylate = xanthurenate + glycine + H2O. It carries out the reaction 2-oxohexanoate + L-kynurenine = L-2-aminohexanoate + kynurenate + H2O. It catalyses the reaction 3-phenylpyruvate + L-kynurenine = kynurenate + L-phenylalanine + H2O. The enzyme catalyses 4-methylsulfanyl-2-oxobutanoate + L-kynurenine = kynurenate + L-methionine + H2O. The catalysed reaction is 2-oxo-3-sulfanylpropanoate + L-kynurenine = kynurenate + L-cysteine + H2O. It carries out the reaction indole-3-pyruvate + L-kynurenine = kynurenate + L-tryptophan + H2O. It catalyses the reaction 2-oxopentanoate + L-kynurenine = L-2-aminopentanoate + kynurenate + H2O. The enzyme catalyses 4-methyl-2-oxopentanoate + L-kynurenine = kynurenate + L-leucine + H2O. The catalysed reaction is glyoxylate + L-methionine = 4-methylsulfanyl-2-oxobutanoate + glycine. It carries out the reaction L-2-aminoadipate + glyoxylate = 2-oxoadipate + glycine. It catalyses the reaction L-tyrosine + glyoxylate = 3-(4-hydroxyphenyl)pyruvate + glycine. The enzyme catalyses glyoxylate + L-phenylalanine = 3-phenylpyruvate + glycine. The catalysed reaction is L-tryptophan + glyoxylate = indole-3-pyruvate + glycine. It carries out the reaction L-leucine + glyoxylate = 4-methyl-2-oxopentanoate + glycine. It catalyses the reaction 2-oxobutanoate + L-kynurenine = (2S)-2-aminobutanoate + kynurenate + H2O. The enzyme catalyses 2-oxoadipate + L-kynurenine = L-2-aminoadipate + kynurenate + H2O. Its pathway is amino-acid degradation; L-lysine degradation via saccharopine pathway; glutaryl-CoA from L-lysine: step 4/6. Functionally, transaminase with broad substrate specificity. Has transaminase activity towards aminoadipate, kynurenine, methionine and glutamate. Shows activity also towards tryptophan, aspartate and hydroxykynurenine. Accepts a variety of oxo-acids as amino-group acceptors, with a preference for 2-oxoglutarate, 2-oxocaproic acid, phenylpyruvate and alpha-oxo-gamma-methiol butyric acid. Can also use glyoxylate as amino-group acceptor (in vitro). The sequence is that of Kynurenine/alpha-aminoadipate aminotransferase, mitochondrial from Bos taurus (Bovine).